Here is a 766-residue protein sequence, read N- to C-terminus: Subtilisin-like protease SBT4.15 (766 aa).

Positions 1–23 are cleaved as a signal peptide; it reads MVSNQRVRLFMLCFCLVNNAVIA. Positions 24-113 are cleaved as a propeptide — activation peptide; the sequence is ATEDENVERK…VFKNTQRQLH (90 aa). One can recognise an Inhibitor I9 domain in the interval 35–113; that stretch reads YIVYMGEATE…VFKNTQRQLH (79 aa). A Peptidase S8 domain is found at 117 to 601; the sequence is SWDFLGLVES…SGQINPRRAI (485 aa). Asp-144 functions as the Charge relay system in the catalytic mechanism. Residue Asn-175 is glycosylated (N-linked (GlcNAc...) asparagine). The active-site Charge relay system is His-210. 3 N-linked (GlcNAc...) asparagine glycosylation sites follow: Asn-233, Asn-376, and Asn-465. In terms of domain architecture, PA spans 365–460; the sequence is MYPLTSGSLA…YVFFEDGTKI (96 aa). Residue Ser-543 is the Charge relay system of the active site. Residues Asn-624, Asn-638, and Asn-668 are each glycosylated (N-linked (GlcNAc...) asparagine).

This sequence belongs to the peptidase S8 family. The C-terminal propeptide is autocleaved.

It localises to the secreted. The chain is Subtilisin-like protease SBT4.15 from Arabidopsis thaliana (Mouse-ear cress).